The primary structure comprises 650 residues: p-hydroxybenzoic acid efflux pump subunit AaeB (650 aa).

11 helical membrane passes run 7–27, 32–52, 61–81, 87–107, 115–135, 148–168, 365–385, 402–422, 426–446, 450–470, and 478–498; these read FPIK…HLNL, WAVM…GGDP, GILR…IMIA, VVML…SSLI, LGLA…SGGL, EIIL…PRSI, LFWL…LGVI, FVYG…YILP, QSAV…GILI, QIGT…DNPM, and IDNA…ILLI.

Belongs to the aromatic acid exporter ArAE (TC 2.A.85) family.

Its subcellular location is the cell inner membrane. In terms of biological role, forms an efflux pump with AaeA. Could function as a metabolic relief valve, allowing to eliminate certain compounds when they accumulate to high levels in the cell. The polypeptide is p-hydroxybenzoic acid efflux pump subunit AaeB (Pantoea ananatis (strain LMG 20103)).